The chain runs to 200 residues: MEHRGTSPLLLALALLSALCWRARALPPRGAAFPAVPRLGNRLPFDAASESDRAHGSLKSESDILQNTLPENEKFYFDLSRIIDRNDRHADGIFTTVYSHLLAKLAVKRYLHSLIRKRVSSQDSPVKRHSDAVFTDNYSRFRKQMAVKKYLNSVLTGKRSQEELNPAKLADEAEILEPSFSENYDDVSVDELLSHLPLDL.

The N-terminal stretch at 1–25 is a signal peptide; sequence MEHRGTSPLLLALALLSALCWRARA. Propeptides lie at residues 26–87 and 119–126; these read LPPR…DRND and VSSQDSPV. Position 156 is a threonine amide (T156). The propeptide occupies 160 to 200; sequence SQEELNPAKLADEAEILEPSFSENYDDVSVDELLSHLPLDL.

This sequence belongs to the glucagon family.

The protein localises to the secreted. Functionally, VIP is a neuropeptide involved in a diverse array of physiological processes through activating the PACAP subfamily of class B1 G protein-coupled receptors: VIP receptor 1 (VPR1) and VIP receptor 2 (VPR2). Abundantly expressed throughout the CNS and peripheral nervous systems where they primarily exert neuroprotective and immune modulatory roles. Also causes vasodilation, lowers arterial blood pressure, stimulates myocardial contractility, increases glycogenolysis and relaxes the smooth muscle of trachea, stomach and gall bladder. In terms of biological role, PHM-27 is a bioactive form from proteolysis of the same precursor protein, that causes vasodilation. This is VIP peptides (VIP) from Meleagris gallopavo (Wild turkey).